The sequence spans 365 residues: tRNA/tmRNA (uracil-C(5))-methyltransferase (365 aa).

Residues glutamine 189, tyrosine 217, asparagine 222, glutamate 238, and aspartate 298 each coordinate S-adenosyl-L-methionine. The Nucleophile role is filled by cysteine 323. Glutamate 357 (proton acceptor) is an active-site residue.

The protein belongs to the class I-like SAM-binding methyltransferase superfamily. RNA M5U methyltransferase family. TrmA subfamily.

It catalyses the reaction uridine(54) in tRNA + S-adenosyl-L-methionine = 5-methyluridine(54) in tRNA + S-adenosyl-L-homocysteine + H(+). It carries out the reaction uridine(341) in tmRNA + S-adenosyl-L-methionine = 5-methyluridine(341) in tmRNA + S-adenosyl-L-homocysteine + H(+). Dual-specificity methyltransferase that catalyzes the formation of 5-methyluridine at position 54 (m5U54) in all tRNAs, and that of position 341 (m5U341) in tmRNA (transfer-mRNA). This is tRNA/tmRNA (uracil-C(5))-methyltransferase from Proteus mirabilis (strain HI4320).